The chain runs to 178 residues: Large ribosomal subunit protein uL6 (178 aa).

The protein belongs to the universal ribosomal protein uL6 family. As to quaternary structure, part of the 50S ribosomal subunit.

Functionally, this protein binds to the 23S rRNA, and is important in its secondary structure. It is located near the subunit interface in the base of the L7/L12 stalk, and near the tRNA binding site of the peptidyltransferase center. The chain is Large ribosomal subunit protein uL6 from Exiguobacterium sibiricum (strain DSM 17290 / CCUG 55495 / CIP 109462 / JCM 13490 / 255-15).